Reading from the N-terminus, the 415-residue chain is Branched-chain-amino-acid aminotransferase 5, chloroplastic (415 aa).

The N-terminal 65 residues, 1–65, are a transit peptide targeting the chloroplast; that stretch reads MERSAVASGF…IVSEVSRNRR (65 aa). K261 is modified (N6-(pyridoxal phosphate)lysine).

This sequence belongs to the class-IV pyridoxal-phosphate-dependent aminotransferase family. The cofactor is pyridoxal 5'-phosphate.

It is found in the plastid. The protein resides in the chloroplast. It carries out the reaction L-leucine + 2-oxoglutarate = 4-methyl-2-oxopentanoate + L-glutamate. The enzyme catalyses L-isoleucine + 2-oxoglutarate = (S)-3-methyl-2-oxopentanoate + L-glutamate. It catalyses the reaction L-valine + 2-oxoglutarate = 3-methyl-2-oxobutanoate + L-glutamate. The protein operates within amino-acid biosynthesis; L-isoleucine biosynthesis; L-isoleucine from 2-oxobutanoate: step 4/4. It participates in amino-acid biosynthesis; L-leucine biosynthesis; L-leucine from 3-methyl-2-oxobutanoate: step 4/4. It functions in the pathway amino-acid biosynthesis; L-valine biosynthesis; L-valine from pyruvate: step 4/4. Functionally, converts 2-oxo acids to branched-chain amino acids. Acts on leucine, isoleucine and valine. The chain is Branched-chain-amino-acid aminotransferase 5, chloroplastic (BCAT5) from Arabidopsis thaliana (Mouse-ear cress).